Consider the following 275-residue polypeptide: Large ribosomal subunit protein uL2 (275 aa).

The interval 223–275 (VAMNPIDHPHGGGEGRTSGGRHPVSPWGVPTKGYKTRSNKRTDKYIVRRRNKK) is disordered.

Belongs to the universal ribosomal protein uL2 family. In terms of assembly, part of the 50S ribosomal subunit. Forms a bridge to the 30S subunit in the 70S ribosome.

Its function is as follows. One of the primary rRNA binding proteins. Required for association of the 30S and 50S subunits to form the 70S ribosome, for tRNA binding and peptide bond formation. It has been suggested to have peptidyltransferase activity; this is somewhat controversial. Makes several contacts with the 16S rRNA in the 70S ribosome. The sequence is that of Large ribosomal subunit protein uL2 from Shewanella woodyi (strain ATCC 51908 / MS32).